A 299-amino-acid chain; its full sequence is GTPase Era (299 aa).

The region spanning 5-175 is the Era-type G domain; it reads RSGFVCFVGR…TDVLAGKLPP (171 aa). Residues 13–20 are G1; that stretch reads GRPNTGKS. 13–20 contributes to the GTP binding site; the sequence is GRPNTGKS. Residues 39–43 form a G2 region; it reads QTTRH. Residues 60–63 are G3; it reads DTPG. Residues 60-64 and 124-127 contribute to the GTP site; these read DTPGL and TKID. The G4 stretch occupies residues 124 to 127; the sequence is TKID. A G5 region spans residues 154 to 156; it reads VSA. The KH type-2 domain occupies 206–285; that stretch reads VRDELPHSLA…YLDLRVKIAK (80 aa).

This sequence belongs to the TRAFAC class TrmE-Era-EngA-EngB-Septin-like GTPase superfamily. Era GTPase family. In terms of assembly, monomer.

The protein resides in the cell envelope. Its subcellular location is the secreted. It is found in the cell wall. Exhibits GTPase activity. Binds RNA but is probably not involved in ribosome assembly in mycobacteria. The polypeptide is GTPase Era (Mycobacterium sp. (strain KMS)).